The following is a 153-amino-acid chain: 3-hydroxyacyl-[acyl-carrier-protein] dehydratase FabZ (153 aa).

His57 is a catalytic residue.

It belongs to the thioester dehydratase family. FabZ subfamily.

It is found in the cytoplasm. It catalyses the reaction a (3R)-hydroxyacyl-[ACP] = a (2E)-enoyl-[ACP] + H2O. Involved in unsaturated fatty acids biosynthesis. Catalyzes the dehydration of short chain beta-hydroxyacyl-ACPs and long chain saturated and unsaturated beta-hydroxyacyl-ACPs. In Xanthomonas campestris pv. campestris (strain 8004), this protein is 3-hydroxyacyl-[acyl-carrier-protein] dehydratase FabZ.